The sequence spans 340 residues: Phenylalanine--tRNA ligase alpha subunit (340 aa).

Glutamate 251 is a Mg(2+) binding site.

The protein belongs to the class-II aminoacyl-tRNA synthetase family. Phe-tRNA synthetase alpha subunit type 1 subfamily. In terms of assembly, tetramer of two alpha and two beta subunits. Requires Mg(2+) as cofactor.

It is found in the cytoplasm. It carries out the reaction tRNA(Phe) + L-phenylalanine + ATP = L-phenylalanyl-tRNA(Phe) + AMP + diphosphate + H(+). The polypeptide is Phenylalanine--tRNA ligase alpha subunit (Porphyromonas gingivalis (strain ATCC 33277 / DSM 20709 / CIP 103683 / JCM 12257 / NCTC 11834 / 2561)).